The sequence spans 173 residues: Ribosome maturation factor RimP (173 aa).

It belongs to the RimP family.

The protein resides in the cytoplasm. Functionally, required for maturation of 30S ribosomal subunits. This chain is Ribosome maturation factor RimP, found in Pelodictyon phaeoclathratiforme (strain DSM 5477 / BU-1).